We begin with the raw amino-acid sequence, 525 residues long: Lymphocyte activation gene 3 protein (525 aa).

An N-terminal signal peptide occupies residues 1–23; it reads MRQDLFLDLLLLQLLWEAPVVSS. Topologically, residues 24–442 are extracellular; the sequence is GPGKELSVVW…ISGDLKGGHL (419 aa). In terms of domain architecture, Ig-like V-type spans 37-163; it reads GAPVHLPCSL…FSCSLRLRVG (127 aa). Residues 37 to 246 are interaction with FGL1; sequence GAPVHLPCSL…LTYRDGFNVS (210 aa). Cys-44 and Cys-156 are oxidised to a cystine. Ig-like C2-type domains lie at 164 to 246, 258 to 341, and 345 to 412; these read QASM…FNVS, PVAP…AAVT, and ITVT…EGQK. Residue Asn-184 is glycosylated (N-linked (GlcNAc...) asparagine). A disulfide bridge connects residues Cys-185 and Cys-235. Asn-244 and Asn-309 each carry an N-linked (GlcNAc...) asparagine glycan. Cystine bridges form between Cys-276–Cys-327 and Cys-363–Cys-405. The segment at 422–442 is connecting peptide; the sequence is ESSSGAWSAKRISGDLKGGHL. Residues 443-463 traverse the membrane as a helical segment; the sequence is FLSLILGALALFLLVTGAFGF. Residues 464–525 lie on the Cytoplasmic side of the membrane; it reads HLWRRQLLRR…PELEPESRQL (62 aa). The segment at 486–525 is disordered; that stretch reads PVQSKIEELEREPETEMEPETEPDPEPQPEPELEPESRQL. The KIEELE motif motif lies at 490–495; the sequence is KIEELE. The segment covering 490-499 has biased composition (basic and acidic residues); that stretch reads KIEELEREPE. Residues 493 to 522 form a 15 X 2 AA tandem repeats of E-X region; that stretch reads ELEREPETEMEPETEPDPEPQPEPELEPES. Over residues 500–519 the composition is skewed to acidic residues; that stretch reads TEMEPETEPDPEPQPEPELE.

This sequence belongs to the LAG3 family. As to quaternary structure, interacts with MHC class II (MHC-II); selectively recognizes stable complexes of peptide and MHC-II. Interacts with FGL1 (via the Fibrinogen C-terminal domain). In terms of processing, proteolytically cleaved by ADAM10 and ADAM17 within the connecting peptide region, leading to release of Secreted lymphocyte activation gene 3 protein (sLAG-3). ADAM10 mediates constitutive cleavage, but cleavage increases following T-cell activation, whereas shedding by ADAM17 is induced by TCR signaling in a PRKCQ-dependent manner.

Its subcellular location is the cell membrane. The protein localises to the secreted. In terms of biological role, lymphocyte activation gene 3 protein: Inhibitory receptor on antigen activated T-cells. Delivers inhibitory signals upon binding to ligands, such as FGL1. FGL1 constitutes a major ligand of LAG3 and is responsible for LAG3 T-cell inhibitory function. Following TCR engagement, LAG3 associates with CD3-TCR in the immunological synapse and directly inhibits T-cell activation. May inhibit antigen-specific T-cell activation in synergy with PDCD1/PD-1, possibly by acting as a coreceptor for PDCD1/PD-1. Negatively regulates the proliferation, activation, effector function and homeostasis of both CD8(+) and CD4(+) T-cells. Also mediates immune tolerance: constitutively expressed on a subset of regulatory T-cells (Tregs) and contributes to their suppressive function. Also acts as a negative regulator of plasmacytoid dendritic cell (pDCs) activation. Binds MHC class II (MHC-II); the precise role of MHC-II-binding is however unclear. Functionally, may function as a ligand for MHC class II (MHC-II) on antigen-presenting cells (APC), promoting APC activation/maturation and driving Th1 immune response. This is Lymphocyte activation gene 3 protein (Lag3) from Rattus norvegicus (Rat).